The sequence spans 352 residues: MSDHSFSAVSAVQALKWSDGGLEVLDQRLLPGDVVYQIFDTAAGVAEAIASMRVRGAPAIGIAAAYGVVLGARAAYARDPAHWKRAVEDDIAVLARSRPTAVNLFWALERMREAMAAIEGDPVPALLAAARRIHEDDLAANLAMGELGAAILGGCKGVLTHCNTGALATGGYGTALGVIRSTWRRGALERVYATETRPWSQGARLTVWELGQDRIPATLLADSAAAWLMKSGAVQWVVVGADRIAANGDVANKIGTYSLAVLARHHGVKLMVVAPISTVDWATATGEDIVVEERDPRELLHPLFLGSDSVIGAWNPVFDVTPAALIDAIVTEAGVVTNPSPDTMATLRGKAR.

Substrate-binding positions include 55–57 (RGA), R98, and Q201. Catalysis depends on D242, which acts as the Proton donor. Position 252–253 (252–253 (NK)) interacts with substrate.

Belongs to the eIF-2B alpha/beta/delta subunits family. MtnA subfamily.

The enzyme catalyses 5-(methylsulfanyl)-alpha-D-ribose 1-phosphate = 5-(methylsulfanyl)-D-ribulose 1-phosphate. The protein operates within amino-acid biosynthesis; L-methionine biosynthesis via salvage pathway; L-methionine from S-methyl-5-thio-alpha-D-ribose 1-phosphate: step 1/6. Its function is as follows. Catalyzes the interconversion of methylthioribose-1-phosphate (MTR-1-P) into methylthioribulose-1-phosphate (MTRu-1-P). The chain is Methylthioribose-1-phosphate isomerase from Methylococcus capsulatus (strain ATCC 33009 / NCIMB 11132 / Bath).